Here is a 357-residue protein sequence, read N- to C-terminus: Alanine racemase (357 aa).

Lys33 (proton acceptor; specific for D-alanine) is an active-site residue. N6-(pyridoxal phosphate)lysine is present on Lys33. Position 130 (Arg130) interacts with substrate. Residue Tyr252 is the Proton acceptor; specific for L-alanine of the active site. Met300 contributes to the substrate binding site.

It belongs to the alanine racemase family. Pyridoxal 5'-phosphate is required as a cofactor.

The catalysed reaction is L-alanine = D-alanine. It participates in amino-acid biosynthesis; D-alanine biosynthesis; D-alanine from L-alanine: step 1/1. In terms of biological role, catalyzes the interconversion of L-alanine and D-alanine. May also act on other amino acids. The chain is Alanine racemase (alr) from Acidiphilium cryptum (strain JF-5).